The following is a 567-amino-acid chain: ERO1-like protein 2 (567 aa).

Positions 1 to 22 are cleaved as a signal peptide; it reads MKIAKGLVGLLILYKNVCQVLC. N-linked (GlcNAc...) asparagine glycosylation is present at N49. Cystine bridges form between C88/C386, C98/C103, C154/C325, and C389/C392. FAD contacts are provided by R188, T190, W201, S258, H261, and K290. The Nucleophile role is filled by C389. C392 is an active-site residue. N546 is a glycosylation site (N-linked (GlcNAc...) asparagine).

The protein belongs to the EROs family. As to quaternary structure, may function both as a monomer and a homodimer. FAD is required as a cofactor. Post-translationally, N-glycosylated.

The protein localises to the endoplasmic reticulum membrane. Essential oxidoreductase that oxidizes proteins in the endoplasmic reticulum to produce disulfide bonds. Acts by oxidizing directly pdi1 isomerase through a direct disulfide exchange. Does not act as a direct oxidant of folding substrate, but relies on pdi1 to transfer oxidizing equivalent. Does not oxidize all pdi related proteins, suggesting that it can discriminate between pdi1 and related proteins. Its reoxidation probably involves electron transfer to molecular oxygen via FAD. Acts independently of glutathione. May be responsible for a significant proportion of reactive oxygen species (ROS) in the cell, thereby being a source of oxidative stress. The chain is ERO1-like protein 2 (ero12) from Schizosaccharomyces pombe (strain 972 / ATCC 24843) (Fission yeast).